Reading from the N-terminus, the 225-residue chain is Red fluorescent protein drFP583 (225 aa).

Residues 66 to 68 (QYG) constitute a cross-link (2-iminomethyl-5-imidazolinone (Gln-Gly)). The residue at position 67 (tyrosine 67) is a (Z)-2,3-didehydrotyrosine.

The protein belongs to the GFP family. In terms of assembly, homotetramer. In terms of processing, contains a chromophore consisting of modified amino acid residues. The chromophore is formed by autocatalytic backbone condensation between Xaa-N and Gly-(N+2), oxidation of Tyr-(N+1) to didehydrotyrosine, and formation of a double bond to the alpha-amino nitrogen of residue Xaa-N. Maturation of the chromophore requires nothing other than molecular oxygen.

Thought to play a role in photoprotection of the coral's resident symbiont microalgae's photosystems from photoinhibition caused by high light levels found near the surface of coral reefs. In deeper water, the fluorescence may be to convert blue light into longer wavelengths more suitable for use in photosynthesis by the microalgal symbionts. The sequence is that of Red fluorescent protein drFP583 from Discosoma sp. (Sea anemone).